A 1004-amino-acid polypeptide reads, in one-letter code: MNKKVVLSVLSTTLVASVAASAFAAPKDGIYIGGNIKKYYSTDVLFEMTPQAKATYASELNAMASDFNNVVFVDYKGKGASIEELFTKGSKVALGEPLKKEDFADLYKVVNKDGSSTATEDARAKVDPTPTGDLNVESVSANNLKEVVVTFDKAVDADTAGDKAYYTFTANKLAVDKVTVSGKTVVLTLAAKAENQASYELNVDGIKGLVKTTKEVKFFDNTTPTVAAVAAIGPKQVKVTFSEPLSAKPSFSVNNGAIAVVADNFVEGTKEVILTLGAQPTASTNTVTVEGGADYASYKVEKVTKDFTVVADTTPPTVSVKKASAKQVVLEFSEDVQNVQDKNVVFYHTTKGHEGYKGTILGVDGKEVTISFVNPLPEGQFKIFVDYVVDNGTQISDLWGNKLPEQVITGTFAADTTPPTVTKVEAKTNTEIHVTFSETVNGADNKANFTLKGVTGNVIPLTKAEVVDAAKNIYKVVTTEPLNGGSYYLTVKGIEDASKNKLVEYTATVAVADTVPPNVKDLDPATPGTDAQLISPTKVKIAFTEPMDKASIENKNNYMFNGFNLDSKVTLTATDSNTAVVVDFTNVVGFNGFKNGDAISVGRVLDTAGNPKTEMQTKVNLPNSVSAPLFDKAEVTGKNTVKLYFKELIINAKADDFAVDNGEGYKAVNSISNDVVENKSVITLTTGNDLPTTAAGVKVKTVGEVDAKNQYGVAVALTDVPADDKIGPNWLKAETVDTNNNGKIDQFKLTFSEALYVASVQDSDFRIEGYTIAGVETKGEVVTIKVTELDIDDSDATPTVAVIGSVEDLKRNASGPFEPQKAIDGVSAPDKEAPVVTGVEAGKTYNTAVTPDSADKDIKTVVLKKDGKELAGYALKTPISENGSYELVVTDNAGNTTTVKFKVDIPAEDKKAPEIKTVTDDKVAVADAPKWEAPKATATDDVDGDISDKIAVTYSSEDAGSKVTDLASAQTHLGTAGNTVKVTYNVTDKAGNPATAVSATFTAI.

An N-terminal signal peptide occupies residues M1–A24.

The outer cell wall layer is composed of subunits of the outer cell wall protein. These proteins form a hexagonal array with a lattice constant of 14.5 nm in the outer cell wall layers.

The protein resides in the secreted. It localises to the cell wall. It is found in the S-layer. In terms of biological role, the outer wall protein binds to the middle cell wall protein. The protein is Outer cell wall protein of Brevibacillus brevis (strain 47 / JCM 6285 / NBRC 100599).